The chain runs to 449 residues: Elongation factor 1-alpha (449 aa).

A tr-type G domain is found at 5–230 (KVHINIVVIG…DQIQEPKRPS (226 aa)). Positions 14-21 (GHVDSGKS) are G1. 14–21 (GHVDSGKS) lines the GTP pocket. The residue at position 55 (Lys55) is an N6,N6-dimethyllysine. The interval 70–74 (GITID) is G2. An N6,N6,N6-trimethyllysine modification is found at Lys79. A G3 region spans residues 91-94 (DAPG). GTP-binding positions include 91–95 (DAPGH) and 153–156 (NKMD). Residues 153 to 156 (NKMD) form a G4 region. Lys187 bears the N6,N6,N6-trimethyllysine mark. The interval 194 to 196 (SGF) is G5. N6-methyllysine is present on Lys261. Glu289 bears the 5-glutamyl glycerylphosphorylethanolamine mark. Lys306 carries the post-translational modification N6,N6,N6-trimethyllysine. The residue at position 362 (Glu362) is a 5-glutamyl glycerylphosphorylethanolamine. Lys396 carries the N6,N6,N6-trimethyllysine modification.

Belongs to the TRAFAC class translation factor GTPase superfamily. Classic translation factor GTPase family. EF-Tu/EF-1A subfamily.

Its subcellular location is the cytoplasm. Functionally, this protein promotes the GTP-dependent binding of aminoacyl-tRNA to the A-site of ribosomes during protein biosynthesis. The sequence is that of Elongation factor 1-alpha (EF1) from Manihot esculenta (Cassava).